Here is an 840-residue protein sequence, read N- to C-terminus: Leucine-zipper-like transcriptional regulator 1 (840 aa).

Ala-2 is subject to N-acetylalanine. Kelch repeat units follow at residues 79–128, 130–185, 187–238, 239–285, 295–341, and 399–450; these read AIYV…VYGS, MFVF…VYSD, LWIF…VCRD, KMFV…QRRY, HLYV…PERA, and AMYI…FVLG. BTB domains follow at residues 443–537 and 667–736; these read CDVE…KYPR and CDIT…NMPP.

Belongs to the LZTR1 family. As to quaternary structure, homodimer. Component of the BCR(LZTR1) E3 ubiquitin ligase complex, at least composed of CUL3, LZTR1 and RBX1. Interacts with Ras (K-Ras/KRAS, N-Ras/NRAS and H-Ras/HRAS). Interacts with RAF1. Interacts with SHOC2. Interacts with PPP1CB. In terms of processing, phosphorylated on tyrosine upon induction of apoptosis, leading to its degradation by the proteasome.

Its subcellular location is the endomembrane system. It localises to the recycling endosome. The protein resides in the golgi apparatus. It functions in the pathway protein modification; protein ubiquitination. Substrate-specific adapter of a BCR (BTB-CUL3-RBX1) E3 ubiquitin-protein ligase complex that mediates ubiquitination of Ras (K-Ras/KRAS, N-Ras/NRAS and H-Ras/HRAS). Is a negative regulator of RAS-MAPK signaling that acts by controlling Ras levels and decreasing Ras association with membranes. This Homo sapiens (Human) protein is Leucine-zipper-like transcriptional regulator 1.